A 185-amino-acid polypeptide reads, in one-letter code: MKNIILSTLVITTSVLVVNVAQADTNAFSVGYAQSKVQDFKNIRGVNVKYRYEDDSPVSFISSLSYLYGDRQASGSVEPEGIHYHDKFEVKYGSLMVGPAYRLSDNFSLYALAGVGTVKATFKEHSTQDGDSFSNKISSRKTGFAWGAGVQMNPLENIVVDVGYEGSNISSTKINGFNVGVGYRF.

The signal sequence occupies residues 1–23 (MKNIILSTLVITTSVLVVNVAQA).

Belongs to the outer membrane OOP (TC 1.B.6) superfamily. Ail family.

It localises to the cell outer membrane. Essential for full virulence and survival within macrophages. The protein is Virulence membrane protein PagC (pagC) of Salmonella typhimurium (strain LT2 / SGSC1412 / ATCC 700720).